Here is a 103-residue protein sequence, read N- to C-terminus: Small ribosomal subunit protein uS10 (103 aa).

The protein belongs to the universal ribosomal protein uS10 family. Part of the 30S ribosomal subunit.

Its function is as follows. Involved in the binding of tRNA to the ribosomes. This is Small ribosomal subunit protein uS10 from Helicobacter hepaticus (strain ATCC 51449 / 3B1).